The sequence spans 614 residues: Membrane protein insertase YidC (614 aa).

Residues 6 to 26 (IVLLIIFSTSLLFLWDAWIKE) traverse the membrane as a helical segment. Composition is skewed to polar residues over residues 34–48 (PAIT…STQS) and 60–70 (ELTSSQASPDT). The interval 34–87 (PAITQADSSAGSTQSRNDDSLPVPGSELTSSQASPDTNGIPASGGNGDSVTPRL) is disordered. 4 consecutive transmembrane segments (helical) span residues 380–400 (WGVA…PLSA), 450–470 (FPIL…LAAV), 484–504 (LSSP…MFVQ), and 524–544 (PVAF…YSLV). The interval 562-614 (TAPSKDTPEPPVSKQVNSSENPETTANSPADSPKQPQTPANNPRKMYKRTRKK) is disordered. Over residues 575 to 602 (KQVNSSENPETTANSPADSPKQPQTPAN) the composition is skewed to polar residues.

It belongs to the OXA1/ALB3/YidC family. Type 1 subfamily. In terms of assembly, interacts with the Sec translocase complex via SecD. Specifically interacts with transmembrane segments of nascent integral membrane proteins during membrane integration.

The protein resides in the cell inner membrane. In terms of biological role, required for the insertion and/or proper folding and/or complex formation of integral membrane proteins into the membrane. Involved in integration of membrane proteins that insert both dependently and independently of the Sec translocase complex, as well as at least some lipoproteins. Aids folding of multispanning membrane proteins. The polypeptide is Membrane protein insertase YidC (Nitrosomonas europaea (strain ATCC 19718 / CIP 103999 / KCTC 2705 / NBRC 14298)).